The chain runs to 327 residues: Putative HTH-type transcriptional regulatory protein MM_0444 (327 aa).

Residues 132-190 (LKKARTTQSMSLGTLASMVGVSRRTISKYEEEGMDASIDVVLHLEDIFGVELAKPIDIL) enclose the HTH cro/C1-type domain. Positions 143–162 (LGTLASMVGVSRRTISKYEE) form a DNA-binding region, H-T-H motif. Residues 195–214 (SRKPRKKAEPEKEEPKGKPG) form a disordered region. The span at 201–211 (KAEPEKEEPKG) shows a compositional bias: basic and acidic residues.

The chain is Putative HTH-type transcriptional regulatory protein MM_0444 from Methanosarcina mazei (strain ATCC BAA-159 / DSM 3647 / Goe1 / Go1 / JCM 11833 / OCM 88) (Methanosarcina frisia).